The chain runs to 249 residues: MASRQMTNDHLRLSWHDTQMMATLSPQTVMDYFCRKSNPFYDHMCNNETVRMQRLGPEHLHNMIGLEYILLHVAEPILYVIRKQHRHNPSEATPIADYYIIGGTVYKAPDLANVINSRILNTVVNLQSAFEEASSYARYHPNKGYTWDFSSNKVFSDRSKSDKKDANSAKDENSGTLFQKQRVDMLLAELLRKFPPPIPPMLQNLQQPPPAGDDLNTARNASEMNNATGPLDIKTEGVDMKPPPEKKSK.

Residues 156–173 show a composition bias toward basic and acidic residues; the sequence is SDRSKSDKKDANSAKDEN. Disordered stretches follow at residues 156–177 and 198–249; these read SDRS…SGTL and IPPM…KKSK. Over residues 217–228 the composition is skewed to polar residues; the sequence is TARNASEMNNAT. The segment covering 233-249 has biased composition (basic and acidic residues); it reads IKTEGVDMKPPPEKKSK.

It belongs to the Mediator complex subunit 6 family. As to quaternary structure, component of the Mediator complex, which includes at least MED4, MED6, MED14, MED17, MED18, MED20, MED21, MED23, MED24, MED27, MED30 and MED31.

The protein resides in the nucleus. Functionally, component of the Mediator complex, a coactivator involved in the regulated transcription of nearly all RNA polymerase II-dependent genes. Mediator functions as a bridge to convey information from gene-specific regulatory proteins to the basal RNA polymerase II transcription machinery. Mediator is recruited to promoters by direct interactions with regulatory proteins and serves as a scaffold for the assembly of a functional preinitiation complex with RNA polymerase II and the general transcription factors. Required for activated transcription of the MtnA, MtnB and MtnD genes. This is Mediator of RNA polymerase II transcription subunit 6 (MED6) from Drosophila melanogaster (Fruit fly).